Here is a 159-residue protein sequence, read N- to C-terminus: MKLNELSPADGSTKKRMRVGRGVGSGKGKTAGRGVKGQNARSGVAVNGFEGGQMPIYMRLPKRGFTSPGSKNMSWVNLGRIAKAIEAGTLDASNVTEESLVAAGVVRKARDGIRLLAKGDAPQKLTITVTGASKAAVEAVEKAGGSVTVTGAPKDAAEE.

A disordered region spans residues methionine 1–asparagine 39. Residues arginine 21–valine 35 are compositionally biased toward gly residues.

Belongs to the universal ribosomal protein uL15 family. In terms of assembly, part of the 50S ribosomal subunit.

Functionally, binds to the 23S rRNA. The sequence is that of Large ribosomal subunit protein uL15 from Hyphomonas neptunium (strain ATCC 15444).